A 68-amino-acid polypeptide reads, in one-letter code: Large ribosomal subunit protein bL31 (68 aa).

Cys16, Cys18, Cys36, and Cys39 together coordinate Zn(2+).

It belongs to the bacterial ribosomal protein bL31 family. Type A subfamily. In terms of assembly, part of the 50S ribosomal subunit. It depends on Zn(2+) as a cofactor.

Binds the 23S rRNA. This is Large ribosomal subunit protein bL31 from Lachnospira eligens (strain ATCC 27750 / DSM 3376 / VPI C15-48 / C15-B4) (Eubacterium eligens).